A 196-amino-acid polypeptide reads, in one-letter code: FMN-dependent NADH:quinone oxidoreductase (196 aa).

Residues S10 and 17 to 19 (SYS) contribute to the FMN site.

This sequence belongs to the azoreductase type 1 family. As to quaternary structure, homodimer. The cofactor is FMN.

The enzyme catalyses 2 a quinone + NADH + H(+) = 2 a 1,4-benzosemiquinone + NAD(+). It catalyses the reaction N,N-dimethyl-1,4-phenylenediamine + anthranilate + 2 NAD(+) = 2-(4-dimethylaminophenyl)diazenylbenzoate + 2 NADH + 2 H(+). In terms of biological role, quinone reductase that provides resistance to thiol-specific stress caused by electrophilic quinones. Its function is as follows. Also exhibits azoreductase activity. Catalyzes the reductive cleavage of the azo bond in aromatic azo compounds to the corresponding amines. The protein is FMN-dependent NADH:quinone oxidoreductase of Metamycoplasma arthritidis (strain 158L3-1) (Mycoplasma arthritidis).